The sequence spans 659 residues: Chaperone protein DnaK (659 aa).

Threonine 201 is modified (phosphothreonine; by autocatalysis). Residues arginine 571–arginine 592 are compositionally biased toward basic and acidic residues. Residues arginine 571–aspartate 659 form a disordered region. The span at alanine 600–glutamine 613 shows a compositional bias: low complexity.

This sequence belongs to the heat shock protein 70 family.

In terms of biological role, acts as a chaperone. This Chlamydia abortus (strain DSM 27085 / S26/3) (Chlamydophila abortus) protein is Chaperone protein DnaK.